The following is a 913-amino-acid chain: Pre-mRNA-processing ATP-dependent RNA helicase PRP5 (913 aa).

Over residues 1–30 (MNSTGSNYSLKHNNTQDNNHNSEESVTNKT) the composition is skewed to polar residues. Disordered stretches follow at residues 1-189 (MNST…SIDT) and 209-244 (ENKKIENHDDDGIANGPGVGNVNESDDEEIDEDQKQ). Basic and acidic residues predominate over residues 45 to 55 (SKEEKLKRRQE). Polar residues predominate over residues 68-82 (NQEPSGKVTISATDE). 3 stretches are compositionally biased toward basic and acidic residues: residues 84–121 (NIDKEKLIRQQRIEEWKRKRLQKSEGLETDRSKIKTFE), 178–188 (IEEKKPEKSID), and 209–219 (ENKKIENHDDD). Positions 192–265 (DELDKYLSLL…QNKQKQLDDV (74 aa)) form a coiled coil. The short motif at 316-345 (IRWSQLGLPSTIMSIIEGRLNYSSPSSIQA) is the Q motif element. Positions 348 to 526 (IPAIMSGRDI…KKILDNPMEI (179 aa)) constitute a Helicase ATP-binding domain. Residue 361–368 (AKTGSGKT) coordinates ATP. The short motif at 474 to 477 (DEAD) is the DEAD box element. Residues 564–713 (TLNDYGDKDA…EINPRLIEIS (150 aa)) form the Helicase C-terminal domain. A disordered region spans residues 755–774 (GEENDSSTFKANEKKQNKTD). Residues 765 to 774 (ANEKKQNKTD) are compositionally biased toward basic and acidic residues.

This sequence belongs to the DEAD box helicase family. DDX46/PRP5 subfamily.

Its subcellular location is the nucleus. The catalysed reaction is ATP + H2O = ADP + phosphate + H(+). Functionally, ATP-dependent RNA helicase involved spliceosome assembly and in nuclear splicing. Catalyzes an ATP-dependent conformational change of U2 snRNP. Bridges U1 and U2 snRNPs and enables stable U2 snRNP association with intron RNA. In Debaryomyces hansenii (strain ATCC 36239 / CBS 767 / BCRC 21394 / JCM 1990 / NBRC 0083 / IGC 2968) (Yeast), this protein is Pre-mRNA-processing ATP-dependent RNA helicase PRP5 (PRP5).